Consider the following 357-residue polypeptide: Protein RecA (357 aa).

Residue 73–80 participates in ATP binding; that stretch reads GPESSGKT.

It belongs to the RecA family.

The protein localises to the cytoplasm. In terms of biological role, can catalyze the hydrolysis of ATP in the presence of single-stranded DNA, the ATP-dependent uptake of single-stranded DNA by duplex DNA, and the ATP-dependent hybridization of homologous single-stranded DNAs. It interacts with LexA causing its activation and leading to its autocatalytic cleavage. The polypeptide is Protein RecA (Nitratidesulfovibrio vulgaris (strain DSM 19637 / Miyazaki F) (Desulfovibrio vulgaris)).